The primary structure comprises 223 residues: Holliday junction branch migration complex subunit RuvA (223 aa).

The tract at residues 1 to 64 is domain I; sequence MIGKLTGRLD…EDLLQLFGFL (64 aa). Residues 65–143 are domain II; it reads SPYEKEWHRL…AVMAMGGTLD (79 aa). The segment at 144–171 is flexible linker; it reads DAMDDVVDDMPGESAAPAPAPQPRAPKR. The segment at 148–177 is disordered; sequence DVVDDMPGESAAPAPAPQPRAPKRPASNAQ. A domain III region spans residues 172–223; that stretch reads PASNAQAEALSALQNLGYGPSDAAQAVAQAAESASNTPELIRAALRLLAPKE.

It belongs to the RuvA family. Homotetramer. Forms an RuvA(8)-RuvB(12)-Holliday junction (HJ) complex. HJ DNA is sandwiched between 2 RuvA tetramers; dsDNA enters through RuvA and exits via RuvB. An RuvB hexamer assembles on each DNA strand where it exits the tetramer. Each RuvB hexamer is contacted by two RuvA subunits (via domain III) on 2 adjacent RuvB subunits; this complex drives branch migration. In the full resolvosome a probable DNA-RuvA(4)-RuvB(12)-RuvC(2) complex forms which resolves the HJ.

It localises to the cytoplasm. Functionally, the RuvA-RuvB-RuvC complex processes Holliday junction (HJ) DNA during genetic recombination and DNA repair, while the RuvA-RuvB complex plays an important role in the rescue of blocked DNA replication forks via replication fork reversal (RFR). RuvA specifically binds to HJ cruciform DNA, conferring on it an open structure. The RuvB hexamer acts as an ATP-dependent pump, pulling dsDNA into and through the RuvAB complex. HJ branch migration allows RuvC to scan DNA until it finds its consensus sequence, where it cleaves and resolves the cruciform DNA. The sequence is that of Holliday junction branch migration complex subunit RuvA from Jannaschia sp. (strain CCS1).